A 229-amino-acid chain; its full sequence is MAKKSKQYQDAAKLVDRDKAYDVTEAVDLVKKMDFAKFDATVEVAFKLNVDTKQADQQLRGAVVLPNGTGKDQTVIVFAKGDKAKEAEEAGADFVGETDLVQKIQDGWLDFDVAIATPDMMAQVGRLGRVLGPKGLMPNPKTGTVTMDVAKAVNDSKAGKVTYRTDRDGNVHVPVGKVSFDTDKLVGNFKTIEDTIVKARPASVRGTFIQNLVVTSTFTPAVRVDLASF.

It belongs to the universal ribosomal protein uL1 family. As to quaternary structure, part of the 50S ribosomal subunit.

In terms of biological role, binds directly to 23S rRNA. The L1 stalk is quite mobile in the ribosome, and is involved in E site tRNA release. Functionally, protein L1 is also a translational repressor protein, it controls the translation of the L11 operon by binding to its mRNA. The sequence is that of Large ribosomal subunit protein uL1 from Lactiplantibacillus plantarum (strain ATCC BAA-793 / NCIMB 8826 / WCFS1) (Lactobacillus plantarum).